The chain runs to 421 residues: Putative aspartate aminotransferase, cytoplasmic 2 (421 aa).

Lys-249 is subject to N6-(pyridoxal phosphate)lysine.

The protein belongs to the class-I pyridoxal-phosphate-dependent aminotransferase family. As to quaternary structure, homodimer. Pyridoxal 5'-phosphate is required as a cofactor.

It is found in the cytoplasm. The catalysed reaction is L-aspartate + 2-oxoglutarate = oxaloacetate + L-glutamate. This Homo sapiens (Human) protein is Putative aspartate aminotransferase, cytoplasmic 2 (GOT1L1).